Consider the following 642-residue polypeptide: Threonine--tRNA ligase (642 aa).

In terms of domain architecture, TGS spans 1–61 (MPVITLPDGS…ENDAQLSIIT (61 aa)). Residues 243-534 (DHRKIGKQLD…LTEEFAGFFP (292 aa)) are catalytic. Residues Cys-334, His-385, and His-511 each contribute to the Zn(2+) site.

It belongs to the class-II aminoacyl-tRNA synthetase family. Homodimer. Zn(2+) is required as a cofactor.

The protein localises to the cytoplasm. The catalysed reaction is tRNA(Thr) + L-threonine + ATP = L-threonyl-tRNA(Thr) + AMP + diphosphate + H(+). In terms of biological role, catalyzes the attachment of threonine to tRNA(Thr) in a two-step reaction: L-threonine is first activated by ATP to form Thr-AMP and then transferred to the acceptor end of tRNA(Thr). Also edits incorrectly charged L-seryl-tRNA(Thr). This chain is Threonine--tRNA ligase, found in Enterobacter sp. (strain 638).